Consider the following 59-residue polypeptide: Potassium channel toxin alpha-KTx 1.14 (59 aa).

The signal sequence occupies residues 1–22 (MKKISFLLLLAIVICSIGWTDG). Position 23 is a pyrrolidone carboxylic acid (Gln23). Cystine bridges form between Cys29–Cys50, Cys35–Cys55, and Cys39–Cys57.

This sequence belongs to the short scorpion toxin superfamily. Potassium channel inhibitor family. Alpha-KTx 01 subfamily. As to expression, expressed by the venom gland.

The protein localises to the secreted. Potent blocker of both large-conductance calcium-activated potassium channels (KCa1.1/KCNMA1) and voltage-gated potassium channels (Kv1.3/KCNA3 and ERG1/Kv11.1/KCNH2). The polypeptide is Potassium channel toxin alpha-KTx 1.14 (Olivierus martensii (Manchurian scorpion)).